A 105-amino-acid polypeptide reads, in one-letter code: Nucleoid-associated protein TTHA1599 (105 aa).

This sequence belongs to the YbaB/EbfC family. In terms of assembly, homodimer.

It is found in the cytoplasm. It localises to the nucleoid. Its function is as follows. Binds to DNA and alters its conformation. May be involved in regulation of gene expression, nucleoid organization and DNA protection. In Thermus thermophilus (strain ATCC 27634 / DSM 579 / HB8), this protein is Nucleoid-associated protein TTHA1599.